Reading from the N-terminus, the 391-residue chain is Multidrug resistance protein MdtL (391 aa).

Helical transmembrane passes span 4 to 24 (FLIC…MYLV), 42 to 62 (IAFS…GKVA), 69 to 89 (PVAI…SLAE), 93 to 113 (LFLA…VVAF), 131 to 151 (LLNG…HLIM), 158 to 178 (SLFW…LFIL), 203 to 222 (FFLS…LTFV), 245 to 265 (ALTA…LGIF), 269 to 289 (TLMI…AVSP), 293 to 313 (ISLF…GVAM), 324 to 346 (AGVA…IWLA), and 363 to 383 (ACSI…PVAA).

This sequence belongs to the major facilitator superfamily. DHA1 family. MdtL (TC 2.A.1.2.22) subfamily.

The protein resides in the cell inner membrane. Its function is as follows. Confers resistance to chloramphenicol. This chain is Multidrug resistance protein MdtL, found in Escherichia fergusonii (strain ATCC 35469 / DSM 13698 / CCUG 18766 / IAM 14443 / JCM 21226 / LMG 7866 / NBRC 102419 / NCTC 12128 / CDC 0568-73).